A 164-amino-acid chain; its full sequence is UPF0304 protein YfbU (164 aa).

The protein belongs to the UPF0304 family.

This is UPF0304 protein YfbU from Salmonella choleraesuis (strain SC-B67).